We begin with the raw amino-acid sequence, 362 residues long: tRNA/tmRNA (uracil-C(5))-methyltransferase (362 aa).

5 residues coordinate S-adenosyl-L-methionine: Gln-182, Tyr-210, Asn-215, Glu-231, and Asp-293. The Nucleophile role is filled by Cys-318. The active-site Proton acceptor is Glu-352.

It belongs to the class I-like SAM-binding methyltransferase superfamily. RNA M5U methyltransferase family. TrmA subfamily.

The enzyme catalyses uridine(54) in tRNA + S-adenosyl-L-methionine = 5-methyluridine(54) in tRNA + S-adenosyl-L-homocysteine + H(+). The catalysed reaction is uridine(341) in tmRNA + S-adenosyl-L-methionine = 5-methyluridine(341) in tmRNA + S-adenosyl-L-homocysteine + H(+). Dual-specificity methyltransferase that catalyzes the formation of 5-methyluridine at position 54 (m5U54) in all tRNAs, and that of position 341 (m5U341) in tmRNA (transfer-mRNA). The protein is tRNA/tmRNA (uracil-C(5))-methyltransferase of Neisseria meningitidis serogroup B (strain ATCC BAA-335 / MC58).